The following is a 207-amino-acid chain: Gap junction epsilon-1 protein (207 aa).

Over 1–22 (MSLNYIKNFYEGCLRPPTVIGQ) the chain is Cytoplasmic. A helical membrane pass occupies residues 23–43 (FHTLFFGSVRTFFLGVLGFAV). Residues 44-74 (YGNEALHFSCDPDKRELNLYCYNQFRPITPQ) lie on the Extracellular side of the membrane. Cystine bridges form between C53-C161 and C64-C147. The helical transmembrane segment at 75-95 (VFWALQLVTVLVPGAVFHLYA) threads the bilayer. At 96 to 111 (ACKNIDQEEILHRPMS) the chain is on the cytoplasmic side. A helical membrane pass occupies residues 112–132 (TVFYIISVLLRIILEVLAFWL). At 133-175 (QSHLFGFLVDPIFMCDVTGLGKILNVSKCMVPEHFEKTIFLSA) the chain is on the extracellular side. The helical transmembrane segment at 176–196 (MYTFTIITILLCIAEIFEILF) threads the bilayer. Residues 197 to 207 (RRLGYLNQPMT) are Cytoplasmic-facing.

The protein belongs to the connexin family. Beta-type (group I) subfamily. In terms of assembly, a connexon is composed of a hexamer of connexins.

It is found in the cell membrane. In terms of biological role, has significant hemichannel activity. However, has only low-efficiency gap junction activity and probably does not function as a gap junction channel in vivo. The chain is Gap junction epsilon-1 protein from Danio rerio (Zebrafish).